A 363-amino-acid polypeptide reads, in one-letter code: sn-glycerol-3-phosphate import ATP-binding protein UgpC (363 aa).

The ABC transporter domain occupies 4–235; that stretch reads VVLRNVRKTY…PATTFVASFI (232 aa). 37–44 contributes to the ATP binding site; sequence GPSGCGKS.

It belongs to the ABC transporter superfamily. sn-glycerol-3-phosphate importer (TC 3.A.1.1.3) family. As to quaternary structure, the complex is composed of two ATP-binding proteins (UgpC), two transmembrane proteins (UgpA and UgpE) and a solute-binding protein (UgpB).

The protein resides in the cell inner membrane. The enzyme catalyses sn-glycerol 3-phosphate(out) + ATP + H2O = sn-glycerol 3-phosphate(in) + ADP + phosphate + H(+). In terms of biological role, part of the ABC transporter complex UgpBAEC involved in sn-glycerol-3-phosphate (G3P) import. Responsible for energy coupling to the transport system. This is sn-glycerol-3-phosphate import ATP-binding protein UgpC from Rhodopseudomonas palustris (strain ATCC BAA-98 / CGA009).